We begin with the raw amino-acid sequence, 397 residues long: Succinate--CoA ligase [ADP-forming] subunit beta (397 aa).

In terms of domain architecture, ATP-grasp spans 9 to 254; it reads KALLKSFGAP…KSEEDEKEIQ (246 aa). ATP contacts are provided by residues Lys46, 53–55, Glu109, Ala112, and Glu117; that span reads GRG. 2 residues coordinate Mg(2+): Asn209 and Asp223. Residues Asn274 and 331–333 contribute to the substrate site; that span reads GIM.

It belongs to the succinate/malate CoA ligase beta subunit family. Heterotetramer of two alpha and two beta subunits. Mg(2+) serves as cofactor.

The catalysed reaction is succinate + ATP + CoA = succinyl-CoA + ADP + phosphate. It catalyses the reaction GTP + succinate + CoA = succinyl-CoA + GDP + phosphate. It functions in the pathway carbohydrate metabolism; tricarboxylic acid cycle; succinate from succinyl-CoA (ligase route): step 1/1. In terms of biological role, succinyl-CoA synthetase functions in the citric acid cycle (TCA), coupling the hydrolysis of succinyl-CoA to the synthesis of either ATP or GTP and thus represents the only step of substrate-level phosphorylation in the TCA. The beta subunit provides nucleotide specificity of the enzyme and binds the substrate succinate, while the binding sites for coenzyme A and phosphate are found in the alpha subunit. This is Succinate--CoA ligase [ADP-forming] subunit beta from Rhizobium rhizogenes (strain K84 / ATCC BAA-868) (Agrobacterium radiobacter).